The following is a 114-amino-acid chain: UPF0102 protein jhp_0762 (114 aa).

Belongs to the UPF0102 family.

In Helicobacter pylori (strain J99 / ATCC 700824) (Campylobacter pylori J99), this protein is UPF0102 protein jhp_0762.